Consider the following 63-residue polypeptide: Large ribosomal subunit protein uL29 (63 aa).

Belongs to the universal ribosomal protein uL29 family.

The sequence is that of Large ribosomal subunit protein uL29 from Proteus mirabilis (strain HI4320).